Consider the following 381-residue polypeptide: Peptidoglycan transport system permease protein YejE (381 aa).

5 consecutive transmembrane segments (helical) span residues 38–58, 183–203, 230–250, 292–312, and 347–367; these read YWSF…EFIA, VLFG…AGAI, ILLI…GIML, LLPN…SGSI, and WLGL…IFVG. Residues 179-371 form the ABC transmembrane type-1 domain; sequence FRISVLFGLT…LLIFVGEAVR (193 aa).

It belongs to the binding-protein-dependent transport system permease family. The complex is composed of one ATP-binding protein (YejF), two transmembrane proteins (YejB and YejE) and a solute-binding protein (YepA or YejA).

It localises to the cell inner membrane. In terms of biological role, part of the ABC transporter complex YejBEF-YepA involved in the uptake of muropeptides, the breakdown products of cell wall peptidoglycan. The import of muropeptides into the cell enables peptidoglycan recycling, which is vital for cell wall integrity in this bacterium. Is also probably part of the ABC transporter complex YejABEF, which is likely involved in broad-spectrum peptide import. Responsible for the translocation of the substrate across the membrane. The protein is Peptidoglycan transport system permease protein YejE of Agrobacterium fabrum (strain C58 / ATCC 33970) (Agrobacterium tumefaciens (strain C58)).